Here is a 315-residue protein sequence, read N- to C-terminus: Eukaryotic translation initiation factor 2 subunit 1 (315 aa).

Residues Glu-17–Arg-88 enclose the S1 motif domain. Ser-49 carries the post-translational modification Phosphoserine; by HRI. Ser-52 is modified (phosphoserine). At Lys-141 the chain carries N6-acetyllysine. A Phosphoserine modification is found at Ser-158. 2 positions are modified to phosphothreonine: Thr-279 and Thr-281. The disordered stretch occupies residues Arg-292–Asp-315. The span at Glu-299–Glu-308 shows a compositional bias: acidic residues.

The protein belongs to the eIF-2-alpha family. Eukaryotic translation initiation factor 2 eIF2 is a heterotrimeric complex composed of an alpha (EIF2S1), a beta (EIF2S2) and a gamma (EIF2S3) chain. eIF2 is member of the 43S pre-initiation complex (43S PIC). eIF2 forms a complex with at least CELF1/CUGBP1, CALR, CALR3, EIF2S1, EIF2S2, HSP90B1 and HSPA5. Interaction with METAP2 protects EIF2S1 from inhibitory phosphorylation. Interacts with ABCF1. Associates with ribosomes. Interacts with DDX3X in an RNA-independent manner. Phosphorylation at Ser-49 and Ser-52 stabilizes the eIF-2/GDP/eIF2B complex and prevents GDP/GTP exchange reaction, thus impairing the recycling of eIF-2 between successive rounds of initiation and leading to global inhibition of translation, while concomitantly initiating the preferential translation of integrated stress response (ISR)-specific mRNAs. Substrate for at least 4 kinases: EIF2AK1/HRI, EIF2AK2/PKR, EIF2AK3/PERK and EIF2AK4/GCN2. Phosphorylation at Ser-52 by the EIF2AK3/PERK protein kinase occurs in response to the unfolded protein response. Phosphorylation on Ser-52 by the EIF2AK4/GCN2 protein kinase occurs in response to amino acid starvation and UV irradiation. Phosphorylation at Ser-52 by EIF2AK1/HRI in response to mitochondrial damage promotes relocalization to the mitochondrial surface.

The protein localises to the cytoplasm. The protein resides in the stress granule. It is found in the cytosol. Its subcellular location is the mitochondrion. Activity is regulated by phosphorylation at Ser-49 and Ser-52, which stabilizes the eIF2/GDP/eIF2B complex and prevents the eIF2B-mediated exchange of GDP for GTP, thereby preventing the formation of the 43S pre-initiation complex (43S PIC). This results in the global attenuation of 5' cap-dependent protein synthesis and concomitant translation of ISR-specific mRNAs that contain a short upstream open reading frame (uORF) in their 5' UTR, such as ATF4, ATF5, DDIT3/CHOP and PPP1R15A/GADD34. Its function is as follows. Member of the eIF2 complex that functions in the early steps of protein synthesis by forming a ternary complex with GTP and initiator tRNA. This complex binds to a 40S ribosomal subunit, followed by mRNA binding to form a 43S pre-initiation complex. Junction of the 60S ribosomal subunit to form the 80S initiation complex is preceded by hydrolysis of the GTP bound to eIF2 and release of an eIF2-GDP binary complex. In order for eIF2 to recycle and catalyze another round of initiation, the GDP bound to eIF2 must exchange with GTP by way of a reaction catalyzed by eIF2B. EIF2S1/eIF2-alpha is a key component of the integrated stress response (ISR), required for adaptation to various stress: phosphorylation by metabolic-stress sensing protein kinases (EIF2AK1/HRI, EIF2AK2/PKR, EIF2AK3/PERK and EIF2AK4/GCN2) in response to stress converts EIF2S1/eIF2-alpha in a global protein synthesis inhibitor, leading to a attenuation of cap-dependent translation, while concomitantly initiating the preferential translation of ISR-specific mRNAs, such as the transcriptional activators ATF4 and QRICH1, and hence allowing ATF4- and QRICH1-mediated reprogramming. EIF2S1/eIF2-alpha also acts as an activator of mitophagy in response to mitochondrial damage: phosphorylation by EIF2AK1/HRI promotes relocalization to the mitochondrial surface, thereby triggering PRKN-independent mitophagy. This is Eukaryotic translation initiation factor 2 subunit 1 (EIF2S1) from Sus scrofa (Pig).